The sequence spans 126 residues: NADP-reducing hydrogenase subunit HndB (126 aa).

Heterotetramer composed of HndA, HndB, HndC and HndD subunits. HndA and HndB could form a heterodimeric intermediate in the electron transfer between the active site of hydrogenase subunit HndD and the NADP reduction site of the reducing subunit HndC.

It catalyses the reaction H2 + NADP(+) = NADPH + H(+). Inhibited by oxygen. In terms of biological role, catalyzes the reduction of NADP in the presence of molecular H2 to yield NADPH. This is NADP-reducing hydrogenase subunit HndB (hndB) from Solidesulfovibrio fructosivorans (Desulfovibrio fructosivorans).